Reading from the N-terminus, the 134-residue chain is Large-conductance mechanosensitive channel (134 aa).

A run of 2 helical transmembrane segments spans residues 16–36 and 81–101; these read VIDLAVGVVIGAAFGKIVTAL and GDFINTLIQFVIVAFAIFIVV.

Belongs to the MscL family. In terms of assembly, homopentamer.

Its subcellular location is the cell inner membrane. Its function is as follows. Channel that opens in response to stretch forces in the membrane lipid bilayer. May participate in the regulation of osmotic pressure changes within the cell. This chain is Large-conductance mechanosensitive channel, found in Stenotrophomonas maltophilia (strain K279a).